The primary structure comprises 682 residues: uncharacterized protein (682 aa).

The MCM domain maps to 284–487 (VVNILADRLI…KDKDIAEYIV (204 aa)). 329-336 (TDPGIGKT) lines the ATP pocket.

It belongs to the MCM family.

This is an uncharacterized protein from Methanocaldococcus jannaschii (strain ATCC 43067 / DSM 2661 / JAL-1 / JCM 10045 / NBRC 100440) (Methanococcus jannaschii).